The sequence spans 218 residues: Alkylmercury lyase (218 aa).

It belongs to the MerB family.

The enzyme catalyses an alkylmercury + H(+) = an alkane + Hg(2+). Cleaves the carbon-mercury bond of organomercurials such as phenylmercuric acetate. One product is Hg(2+), which is subsequently detoxified by the mercuric reductase. This is Alkylmercury lyase from Clostridium butyricum.